A 482-amino-acid polypeptide reads, in one-letter code: Coagulation factor X (482 aa).

The first 20 residues, 1–20 (MESPVRLSLLYVVLASLLLP), serve as a signal peptide directing secretion. The propeptide occupies 21-40 (GRSVFINRERANNVLQRIRR). The Gla domain occupies 41–85 (ANSFFEEIKKGNLERECVEEICSFEEAREVFEDNEKTTEFWNKYE). 4-carboxyglutamate occurs at positions 46, 47, 54, 56, 59, 60, 65, 66, 69, 72, 75, and 79. An intrachain disulfide couples Cys-57 to Cys-62. One can recognise an EGF-like 1; calcium-binding domain in the interval 86 to 122 (DGDQCESSPCQNQGECRDGLGSYTCTCTEGFEGKNCE). 11 disulfide bridges follow: Cys-90–Cys-101, Cys-95–Cys-110, Cys-112–Cys-121, Cys-129–Cys-140, Cys-136–Cys-149, Cys-151–Cys-164, Cys-172–Cys-340, Cys-238–Cys-243, Cys-259–Cys-275, Cys-388–Cys-402, and Cys-413–Cys-441. A (3R)-3-hydroxyaspartate modification is found at Asp-103. In terms of domain architecture, EGF-like 2 spans 125 to 165 (VRKLCSLDNGDCDQFCREEQNSVVCSCAKGYFLGNDGKSCL). Positions 184-231 (VALNTSNSEPDPEDLMPDADILYPTESPSELLNLNKTEPEANSDDVIR) are cleaved as a propeptide — activation peptide. N-linked (GlcNAc...) asparagine glycans are attached at residues Asn-187 and Asn-218. One can recognise a Peptidase S1 domain in the interval 232 to 465 (IVGGQECKRG…FLKWIDRSMK (234 aa)). Catalysis depends on charge relay system residues His-274 and Asp-320. The active-site Charge relay system is Ser-417.

This sequence belongs to the peptidase S1 family. The two chains are formed from a single-chain precursor by the excision of two Arg residues and are held together by 1 or more disulfide bonds. Forms a heterodimer with SERPINA5. Interacts with ixolaris, an anticoagulant protein from Ixodes scapularis saliva. The vitamin K-dependent, enzymatic carboxylation of some glutamate residues allows the modified protein to bind calcium. In terms of processing, N- and O-glycosylated. Post-translationally, proteolytically cleaved and activated by cathepsin CTSG. The activation peptide is cleaved by factor IXa (in the intrinsic pathway), or by factor VIIa (in the extrinsic pathway). The iron and 2-oxoglutarate dependent 3-hydroxylation of aspartate and asparagine is (R) stereospecific within EGF domains. In terms of tissue distribution, plasma; synthesized in the liver.

Its subcellular location is the secreted. It catalyses the reaction Selective cleavage of Arg-|-Thr and then Arg-|-Ile bonds in prothrombin to form thrombin.. With respect to regulation, inhibited by SERPINA5. Functionally, factor Xa is a vitamin K-dependent glycoprotein that converts prothrombin to thrombin in the presence of factor Va, calcium and phospholipid during blood clotting. Factor Xa activates pro-inflammatory signaling pathways in a protease-activated receptor (PAR)-dependent manner. This Rattus norvegicus (Rat) protein is Coagulation factor X (F10).